We begin with the raw amino-acid sequence, 184 residues long: Cytochrome c homolog (184 aa).

Over 1–10 (MDSFELNKIL) the chain is Cytoplasmic. A helical; Signal-anchor transmembrane segment spans residues 11–31 (GAVLGTCLILLVTSFTANALF). The Periplasmic portion of the chain corresponds to 32 to 184 (SPKMPEKPGF…HPKPLPTASK (153 aa)). 4 residues coordinate heme c: cysteine 84, cysteine 87, histidine 88, and methionine 151.

This sequence belongs to the cytochrome c family. In terms of processing, binds 1 heme c group covalently per subunit.

It is found in the cell membrane. Its function is as follows. May be involved in electron transfer from bc1 complex to aa3. The sequence is that of Cytochrome c homolog (cycM) from Bradyrhizobium diazoefficiens (strain JCM 10833 / BCRC 13528 / IAM 13628 / NBRC 14792 / USDA 110).